Consider the following 366-residue polypeptide: Spermidine/putrescine import ATP-binding protein PotA (366 aa).

One can recognise an ABC transporter domain in the interval 8–239 (IRFENVTKQF…PINKFVADFI (232 aa)). 41–48 (GPSGCGKT) contacts ATP.

Belongs to the ABC transporter superfamily. Spermidine/putrescine importer (TC 3.A.1.11.1) family. In terms of assembly, the complex is composed of two ATP-binding proteins (PotA), two transmembrane proteins (PotB and PotC) and a solute-binding protein (PotD).

It is found in the cell membrane. The enzyme catalyses ATP + H2O + polyamine-[polyamine-binding protein]Side 1 = ADP + phosphate + polyamineSide 2 + [polyamine-binding protein]Side 1.. Functionally, part of the ABC transporter complex PotABCD involved in spermidine/putrescine import. Responsible for energy coupling to the transport system. The polypeptide is Spermidine/putrescine import ATP-binding protein PotA (Listeria innocua serovar 6a (strain ATCC BAA-680 / CLIP 11262)).